The following is a 282-amino-acid chain: Probable endonuclease 4 (282 aa).

Zn(2+)-binding residues include His66, His106, Glu143, Asp177, His180, His214, Asp227, His229, and Glu259.

Belongs to the AP endonuclease 2 family. Zn(2+) serves as cofactor.

It carries out the reaction Endonucleolytic cleavage to 5'-phosphooligonucleotide end-products.. Functionally, endonuclease IV plays a role in DNA repair. It cleaves phosphodiester bonds at apurinic or apyrimidinic (AP) sites, generating a 3'-hydroxyl group and a 5'-terminal sugar phosphate. This chain is Probable endonuclease 4, found in Nitratidesulfovibrio vulgaris (strain DP4) (Desulfovibrio vulgaris).